The following is a 214-amino-acid chain: Acetoin utilization protein AcuB (214 aa).

CBS domains lie at 7 to 66 and 78 to 135; these read MKRD…ENKR and MKKD…GADQ.

As to quaternary structure, interacts with YabA.

It participates in ketone degradation; acetoin degradation. Functionally, role in growth and sporulation on acetoin or butanediol. Involved in the breakdown of these compounds used as a carbon source. In Bacillus subtilis (strain 168), this protein is Acetoin utilization protein AcuB (acuB).